The chain runs to 78 residues: Ferredoxin oxidoreductase 2 subunit ForD (78 aa).

4Fe-4S ferredoxin-type domains follow at residues 3–35 and 37–66; these read FVADVKEKECAQYNCKQCVLFCPEPNCLNFKAS and NSAWVWYDRCKGCEICVYVCSDLLKRHCIE. [4Fe-4S] cluster is bound by residues Cys12, Cys17, Cys20, Cys24, Cys46, Cys49, Cys52, and Cys56.

In terms of assembly, heterotetramer of one alpha, one beta, one delta and one gamma chain. The cofactor is [4Fe-4S] cluster.

In Aquifex aeolicus (strain VF5), this protein is Ferredoxin oxidoreductase 2 subunit ForD (forD2).